The chain runs to 101 residues: Urease subunit beta (101 aa).

Belongs to the urease beta subunit family. As to quaternary structure, heterotrimer of UreA (gamma), UreB (beta) and UreC (alpha) subunits. Three heterotrimers associate to form the active enzyme.

It is found in the cytoplasm. The enzyme catalyses urea + 2 H2O + H(+) = hydrogencarbonate + 2 NH4(+). The protein operates within nitrogen metabolism; urea degradation; CO(2) and NH(3) from urea (urease route): step 1/1. The protein is Urease subunit beta of Ralstonia pickettii (strain 12J).